Here is a 226-residue protein sequence, read N- to C-terminus: RLA class II histocompatibility antigen, DP alpha-1 chain (226 aa).

The Extracellular portion of the chain corresponds to 1 to 189 (EHVSVFVIFA…PIQMPETTET (189 aa)). Asparagine 75 and asparagine 115 each carry an N-linked (GlcNAc...) asparagine glycan. The 93-residue stretch at 84-176 (PEVIVFPKEP…LDAPLLTHWE (93 aa)) folds into the Ig-like C1-type domain. A disulfide bond links cysteine 104 and cysteine 160. A helical transmembrane segment spans residues 190–210 (VVCALGLVVGLAGVVVGIVLI). Residues 211-226 (TKALRSSPDPRARRPL) are Cytoplasmic-facing.

Belongs to the MHC class II family.

It localises to the membrane. The sequence is that of RLA class II histocompatibility antigen, DP alpha-1 chain from Oryctolagus cuniculus (Rabbit).